The chain runs to 338 residues: Tetraacyldisaccharide 4'-kinase (338 aa).

65 to 72 (TVGGTGKT) is a binding site for ATP.

The protein belongs to the LpxK family.

It carries out the reaction a lipid A disaccharide + ATP = a lipid IVA + ADP + H(+). It participates in glycolipid biosynthesis; lipid IV(A) biosynthesis; lipid IV(A) from (3R)-3-hydroxytetradecanoyl-[acyl-carrier-protein] and UDP-N-acetyl-alpha-D-glucosamine: step 6/6. Transfers the gamma-phosphate of ATP to the 4'-position of a tetraacyldisaccharide 1-phosphate intermediate (termed DS-1-P) to form tetraacyldisaccharide 1,4'-bis-phosphate (lipid IVA). In Paraburkholderia xenovorans (strain LB400), this protein is Tetraacyldisaccharide 4'-kinase.